The primary structure comprises 816 residues: Transcription factor qa-1f (816 aa).

The zn(2)-C6 fungal-type DNA-binding region spans 76 to 103 (CDQCRAAREKCDGIQPACFPCVSQGRSC). Residues 184 to 202 (SGQAAQDPSEDGQSPSEDI) show a composition bias toward polar residues. The interval 184–235 (SGQAAQDPSEDGQSPSEDINVQDAGAKTSDFPHAPHLTFSAPKSSTAETRTL) is disordered.

The protein resides in the nucleus. Functionally, transcription activator; part of the qa gene cluster that mediates the catabolism of quinic acid (QA) and as such, allows the use of QA as a sole carbon source. Activates the expression of qa cluster genes by binding to a 16 base-pair consensus sequence 5'-GGRTAARYRYTTAYCC-3' present in the promoters of the target genes. Regulates its own expression. May regulate the expression of many other genes inclusing genes with products in 8 mutually connected metabolic pathways: (1) starch and sucrose metabolism; (2) glycolysis/glucanogenesis; (3) TCA Cycle; (4) butanoate metabolism; (5) pyruvate metabolism; (6) aromatic amino acid and QA metabolism; (7) valine, leucine, and isoleucine degradation; and (8) transport of sugars and amino acids. This is Transcription factor qa-1f from Neurospora crassa (strain ATCC 24698 / 74-OR23-1A / CBS 708.71 / DSM 1257 / FGSC 987).